Consider the following 334-residue polypeptide: Probable prephenate dehydratase (334 aa).

The Prephenate dehydratase domain maps to 7 to 224; the sequence is RVLFLGPKGT…NTTRFLVLKR (218 aa). One can recognise an ACT domain in the interval 244–322; it reads LTFTTRQDDP…SDKSKQWCLW (79 aa).

It is found in the cytoplasm. It catalyses the reaction prephenate + H(+) = 3-phenylpyruvate + CO2 + H2O. The protein operates within amino-acid biosynthesis; L-phenylalanine biosynthesis; phenylpyruvate from prephenate: step 1/1. Functionally, catayzes the decarboxylation/dehydration of prephenate to phenylpyruvate. In Saccharomyces cerevisiae (strain ATCC 204508 / S288c) (Baker's yeast), this protein is Probable prephenate dehydratase (PHA2).